The primary structure comprises 113 residues: Ribonuclease P protein component (113 aa).

Belongs to the RnpA family. In terms of assembly, consists of a catalytic RNA component (M1 or rnpB) and a protein subunit.

The enzyme catalyses Endonucleolytic cleavage of RNA, removing 5'-extranucleotides from tRNA precursor.. RNaseP catalyzes the removal of the 5'-leader sequence from pre-tRNA to produce the mature 5'-terminus. It can also cleave other RNA substrates such as 4.5S RNA. The protein component plays an auxiliary but essential role in vivo by binding to the 5'-leader sequence and broadening the substrate specificity of the ribozyme. In Ureaplasma parvum serovar 3 (strain ATCC 27815 / 27 / NCTC 11736), this protein is Ribonuclease P protein component.